We begin with the raw amino-acid sequence, 74 residues long: WAP four-disulfide core domain protein 18 (74 aa).

Positions 1–24 (MKTATVFVLVALIFMTMTTAWALS) are cleaved as a signal peptide. Residues 26 to 73 (PKEKPGACPKPPPRSFGTCDERCTGDGSCSGNMKCCSNGCGHACKPPV) form the WAP domain.

It is found in the secreted. Could have proteinase inhibiting capacity. This Bos taurus (Bovine) protein is WAP four-disulfide core domain protein 18 (WFDC18).